The following is a 638-amino-acid chain: RAF proto-oncogene serine/threonine-protein kinase (638 aa).

Ser-43 bears the Phosphoserine mark. In terms of domain architecture, RBD spans 56 to 130 (STMRVYLPNK…VGAELQVDFL (75 aa)). The segment at 137 to 183 (THNFVRKTFLKLAFCDICQKFLLNAFRCQTCGYKFHEHCSTKVPTMC) adopts a Phorbol-ester/DAG-type zinc-finger fold. The Zn(2+) site is built by His-138, Cys-151, Cys-154, Cys-164, Cys-167, His-172, Cys-175, and Cys-183. Residue Ser-257 is modified to Phosphoserine. Phosphothreonine; by autocatalysis is present on Thr-266. Positions 279–323 (LRSHSESGSPNNLSPTGWSNAKAPAPTHREKAASSTGQEKNKIRA) are disordered. The segment covering 284 to 297 (ESGSPNNLSPTGWS) has biased composition (polar residues). Phosphoserine is present on Ser-329. Positions 340 to 600 (VMLSSRIGSG…PQILSSIELL (261 aa)) constitute a Protein kinase domain. ATP is bound by residues 346–354 (IGSGSFGTV) and Lys-366. The Proton acceptor role is filled by Asp-459. Position 490 is a phosphoserine (Ser-490).

This sequence belongs to the protein kinase superfamily. TKL Ser/Thr protein kinase family. RAF subfamily. Requires Zn(2+) as cofactor. In terms of processing, phosphorylation at Ser-257 inactivates kinase activity. Dephosphorylation of Ser-257 by a complex containing protein phosphatase 1 relieves inactivation, leading to stimulate RAF1 activity.

The protein localises to the cytoplasm. It is found in the cell membrane. The enzyme catalyses L-seryl-[protein] + ATP = O-phospho-L-seryl-[protein] + ADP + H(+). The catalysed reaction is L-threonyl-[protein] + ATP = O-phospho-L-threonyl-[protein] + ADP + H(+). In terms of biological role, serine/threonine-protein kinase that acts as a regulatory link between the membrane-associated Ras GTPases and the MAPK/ERK cascade, and this critical regulatory link functions as a switch determining cell fate decisions. RAF1 activation initiates a mitogen-activated protein kinase (MAPK) cascade that comprises a sequential phosphorylation of the dual-specific MAPK kinases (MAP2K1/MEK1 and MAP2K2/MEK2) and the extracellular signal-regulated kinases (MAPK3/ERK1 and MAPK1/ERK2). This chain is RAF proto-oncogene serine/threonine-protein kinase (raf1), found in Xenopus laevis (African clawed frog).